The following is a 303-amino-acid chain: tRNA pseudouridine synthase B (303 aa).

Aspartate 53 (nucleophile) is an active-site residue.

Belongs to the pseudouridine synthase TruB family. Type 1 subfamily.

It catalyses the reaction uridine(55) in tRNA = pseudouridine(55) in tRNA. Functionally, responsible for synthesis of pseudouridine from uracil-55 in the psi GC loop of transfer RNAs. The chain is tRNA pseudouridine synthase B from Zymomonas mobilis subsp. mobilis (strain ATCC 31821 / ZM4 / CP4).